Consider the following 508-residue polypeptide: Mitochondrial distribution and morphology protein 10 (508 aa).

The tract at residues 160–195 is disordered; that stretch reads PAHPTSTRPTPPQTPPSHTRQPSEPSTPAPSPTPGN.

It belongs to the MDM10 family. In terms of assembly, component of the ER-mitochondria encounter structure (ERMES) or MDM complex, composed of MMM1, MDM10, MDM12 and MDM34. Associates with the mitochondrial outer membrane sorting assembly machinery SAM(core) complex.

Its subcellular location is the mitochondrion outer membrane. Component of the ERMES/MDM complex, which serves as a molecular tether to connect the endoplasmic reticulum and mitochondria. Components of this complex are involved in the control of mitochondrial shape and protein biogenesis and may function in phospholipid exchange. MDM10 is involved in the late assembly steps of the general translocase of the mitochondrial outer membrane (TOM complex). Functions in the TOM40-specific route of the assembly of outer membrane beta-barrel proteins, including the association of TOM40 with the receptor TOM22 and small TOM proteins. Can associate with the SAM(core) complex as well as the MDM12-MMM1 complex, both involved in late steps of the major beta-barrel assembly pathway, that is responsible for biogenesis of all outer membrane beta-barrel proteins. May act as a switch that shuttles between both complexes and channels precursor proteins into the TOM40-specific pathway. Plays a role in mitochondrial morphology and in the inheritance of mitochondria. The protein is Mitochondrial distribution and morphology protein 10 of Cryptococcus neoformans var. neoformans serotype D (strain JEC21 / ATCC MYA-565) (Filobasidiella neoformans).